The following is a 165-amino-acid chain: Endoribonuclease YbeY (165 aa).

Zn(2+) contacts are provided by H130, H134, and H140.

This sequence belongs to the endoribonuclease YbeY family. The cofactor is Zn(2+).

The protein localises to the cytoplasm. Single strand-specific metallo-endoribonuclease involved in late-stage 70S ribosome quality control and in maturation of the 3' terminus of the 16S rRNA. This Streptococcus sanguinis (strain SK36) protein is Endoribonuclease YbeY.